A 141-amino-acid chain; its full sequence is ATP synthase F(0) complex subunit C2, mitochondrial (141 aa).

The transit peptide at 1–66 directs the protein to the mitochondrion; that stretch reads MFSCFKFIST…RNFQTSAISR (66 aa). Residues 82-102 form a helical membrane-spanning segment; it reads VGVAGSGAGIGTVFGSLIIGY. Residue Lys-109 is modified to N6,N6,N6-trimethyllysine. A helical membrane pass occupies residues 117–137; sequence ILGFALSEAMGLFCLMVAFLI.

This sequence belongs to the ATPase C chain family. In terms of assembly, F-type ATPases have 2 components, CF(1) - the catalytic core - and CF(0) - the membrane proton channel. CF(1) has five subunits: alpha(3), beta(3), gamma(1), delta(1), epsilon(1). CF(0) has three main subunits: a, b and c. Interacts with DNAJC30; interaction is direct. Trimethylated by ATPSCKMT at Lys-109. Methylation is required for proper incorporation of the C subunit into the ATP synthase complex and mitochondrial respiration.

Its subcellular location is the mitochondrion membrane. Its function is as follows. Mitochondrial membrane ATP synthase (F(1)F(0) ATP synthase or Complex V) produces ATP from ADP in the presence of a proton gradient across the membrane which is generated by electron transport complexes of the respiratory chain. F-type ATPases consist of two structural domains, F(1) - containing the extramembraneous catalytic core and F(0) - containing the membrane proton channel, linked together by a central stalk and a peripheral stalk. During catalysis, ATP synthesis in the catalytic domain of F(1) is coupled via a rotary mechanism of the central stalk subunits to proton translocation. Part of the complex F(0) domain. A homomeric c-ring of probably 10 subunits is part of the complex rotary element. This is ATP synthase F(0) complex subunit C2, mitochondrial from Pongo abelii (Sumatran orangutan).